Consider the following 159-residue polypeptide: Glutamate-rich protein GrpA (159 aa).

This chain is Glutamate-rich protein GrpA (grpA), found in Alkalihalophilus pseudofirmus (strain ATCC BAA-2126 / JCM 17055 / OF4) (Bacillus pseudofirmus).